We begin with the raw amino-acid sequence, 192 residues long: Ribose 1,5-bisphosphate phosphokinase PhnN (192 aa).

15–22 (GPSGAGKD) lines the ATP pocket.

It belongs to the ribose 1,5-bisphosphokinase family.

It carries out the reaction alpha-D-ribose 1,5-bisphosphate + ATP = 5-phospho-alpha-D-ribose 1-diphosphate + ADP. Its pathway is metabolic intermediate biosynthesis; 5-phospho-alpha-D-ribose 1-diphosphate biosynthesis; 5-phospho-alpha-D-ribose 1-diphosphate from D-ribose 5-phosphate (route II): step 3/3. Its function is as follows. Catalyzes the phosphorylation of ribose 1,5-bisphosphate to 5-phospho-D-ribosyl alpha-1-diphosphate (PRPP). This Brucella abortus biovar 1 (strain 9-941) protein is Ribose 1,5-bisphosphate phosphokinase PhnN.